A 147-amino-acid polypeptide reads, in one-letter code: Transcription antitermination protein NusB (147 aa).

It belongs to the NusB family.

Functionally, involved in transcription antitermination. Required for transcription of ribosomal RNA (rRNA) genes. Binds specifically to the boxA antiterminator sequence of the ribosomal RNA (rrn) operons. In Legionella pneumophila (strain Paris), this protein is Transcription antitermination protein NusB.